A 73-amino-acid chain; its full sequence is UPF0346 protein SAS1364 (73 aa).

This sequence belongs to the UPF0346 family.

In Staphylococcus aureus (strain MSSA476), this protein is UPF0346 protein SAS1364.